A 97-amino-acid chain; its full sequence is YcgL domain-containing protein PST_1364 (97 aa).

The YcgL domain occupies 3 to 87; it reads LICSIYKSPR…AEDEYIEHLP (85 aa).

The sequence is that of YcgL domain-containing protein PST_1364 from Stutzerimonas stutzeri (strain A1501) (Pseudomonas stutzeri).